The chain runs to 343 residues: Probable 4-hydroxy-tetrahydrodipicolinate reductase 1, chloroplastic (343 aa).

The N-terminal 14 residues, 1 to 14 (MLASTFATHPAAAA), are a transit peptide targeting the chloroplast. NAD(+)-binding positions include 167–169 (GTT) and 190–193 (SPQM). The active-site Proton donor/acceptor is the histidine 226. Residue lysine 230 is the Proton donor of the active site. 235-236 (GT) is a (S)-2,3,4,5-tetrahydrodipicolinate binding site.

This sequence belongs to the DapB family.

It localises to the plastid. It is found in the chloroplast. The enzyme catalyses (S)-2,3,4,5-tetrahydrodipicolinate + NAD(+) + H2O = (2S,4S)-4-hydroxy-2,3,4,5-tetrahydrodipicolinate + NADH + H(+). It carries out the reaction (S)-2,3,4,5-tetrahydrodipicolinate + NADP(+) + H2O = (2S,4S)-4-hydroxy-2,3,4,5-tetrahydrodipicolinate + NADPH + H(+). It functions in the pathway amino-acid biosynthesis; L-lysine biosynthesis via DAP pathway; (S)-tetrahydrodipicolinate from L-aspartate: step 4/4. Its function is as follows. Catalyzes the conversion of 4-hydroxy-tetrahydrodipicolinate (HTPA) to tetrahydrodipicolinate. This Oryza sativa subsp. japonica (Rice) protein is Probable 4-hydroxy-tetrahydrodipicolinate reductase 1, chloroplastic (DAPB1).